Reading from the N-terminus, the 388-residue chain is D-xylose dehydrogenase (388 aa).

The protein belongs to the Gfo/Idh/MocA family. In terms of assembly, homotetramer. Zn(2+) serves as cofactor.

It catalyses the reaction D-xylose + NADP(+) = D-xylono-1,5-lactone + NADPH + H(+). The catalysed reaction is D-xylose + NAD(+) = D-xylono-1,5-lactone + NADH + H(+). It participates in carbohydrate metabolism; D-xylose degradation. Catalyzes the NADP(+)-dependent oxidation of D-xylose. Is able to use both NADP(+) and NAD(+); however, the enzyme shows a very strong preference for NADP(+). Is likely involved in the first step of the oxidative D-xylose degradation pathway. This is D-xylose dehydrogenase (xdh) from Paenarthrobacter nicotinovorans (Arthrobacter nicotinovorans).